We begin with the raw amino-acid sequence, 500 residues long: NAD(P)H-quinone oxidoreductase chain 4, chloroplastic (500 aa).

14 helical membrane passes run 4-24 (FPWLTLIVVFPIFAGCFIFFL), 35-55 (YTMGICLLELLIMTYVFCYHF), 87-107 (IGPILLTGFITTLATLAAWPV), 113-130 (LFHFLMLAMYSGQIGLFS), 134-154 (LLLFFMMWELELIPVYLLLSM), 167-187 (FILYTAGGSIFLLIGVLGMGL), 208-228 (GLEILLYFGFLIAFAVKLPII), 242-262 (HYSTCMLLAGILLKMGAYGLI), 274-294 (SIFSPWLVIVGTIQIIYAALT), 305-325 (IAYSSVSHMGFIIIGIGSLTN), 330-350 (GAILQLLSHGFIGAALFFLGG), 386-406 (LALPGMSGFVAELMVFLGIIT), 416-436 (IIITLVMAIGIILTPIYLLSM), and 463-483 (FVSICIFLPVIAIGIYPDLVI).

It belongs to the complex I subunit 4 family.

It is found in the plastid. Its subcellular location is the chloroplast thylakoid membrane. The catalysed reaction is a plastoquinone + NADH + (n+1) H(+)(in) = a plastoquinol + NAD(+) + n H(+)(out). It catalyses the reaction a plastoquinone + NADPH + (n+1) H(+)(in) = a plastoquinol + NADP(+) + n H(+)(out). The chain is NAD(P)H-quinone oxidoreductase chain 4, chloroplastic from Lemna minor (Common duckweed).